The chain runs to 480 residues: ATP synthase subunit beta (480 aa).

158–165 lines the ATP pocket; that stretch reads GGAGVGKT.

The protein belongs to the ATPase alpha/beta chains family. In terms of assembly, F-type ATPases have 2 components, CF(1) - the catalytic core - and CF(0) - the membrane proton channel. CF(1) has five subunits: alpha(3), beta(3), gamma(1), delta(1), epsilon(1). CF(0) has three main subunits: a(1), b(2) and c(9-12). The alpha and beta chains form an alternating ring which encloses part of the gamma chain. CF(1) is attached to CF(0) by a central stalk formed by the gamma and epsilon chains, while a peripheral stalk is formed by the delta and b chains.

It localises to the cell inner membrane. It catalyses the reaction ATP + H2O + 4 H(+)(in) = ADP + phosphate + 5 H(+)(out). In terms of biological role, produces ATP from ADP in the presence of a proton gradient across the membrane. The catalytic sites are hosted primarily by the beta subunits. The sequence is that of ATP synthase subunit beta from Acidobacterium capsulatum (strain ATCC 51196 / DSM 11244 / BCRC 80197 / JCM 7670 / NBRC 15755 / NCIMB 13165 / 161).